The chain runs to 189 residues: GMP synthase [glutamine-hydrolyzing] subunit A (189 aa).

The 185-residue stretch at 5–189 folds into the Glutamine amidotransferase type-1 domain; that stretch reads KILVVNNYGQ…MNFFEVCDLY (185 aa). The Nucleophile role is filled by Cys-79. Active-site residues include His-166 and Glu-168.

Heterodimer composed of a glutamine amidotransferase subunit (A) and a GMP-binding subunit (B).

It catalyses the reaction XMP + L-glutamine + ATP + H2O = GMP + L-glutamate + AMP + diphosphate + 2 H(+). It functions in the pathway purine metabolism; GMP biosynthesis; GMP from XMP (L-Gln route): step 1/1. In terms of biological role, catalyzes the synthesis of GMP from XMP. The polypeptide is GMP synthase [glutamine-hydrolyzing] subunit A (Methanosarcina mazei (strain ATCC BAA-159 / DSM 3647 / Goe1 / Go1 / JCM 11833 / OCM 88) (Methanosarcina frisia)).